A 219-amino-acid polypeptide reads, in one-letter code: Probable lipoprotein YiaD (219 aa).

Residues 1–20 (MKKRVYLIAAVVSGALAVSG) form the signal peptide. The N-palmitoyl cysteine moiety is linked to residue cysteine 21. Cysteine 21 carries the S-diacylglycerol cysteine lipid modification. 2 consecutive transmembrane segments (helical) span residues 37-55 (IGAG…LSSS) and 62-84 (GALI…MDVQ). Residues 103–219 (GDNIILNMPN…RRVEITLSPL (117 aa)) enclose the OmpA-like domain.

Its subcellular location is the cell inner membrane. The protein localises to the cell outer membrane. Its function is as follows. Suppresses temperature-sensitive mutations in BamB when overexpressed. This Escherichia coli (strain K12) protein is Probable lipoprotein YiaD (yiaD).